The primary structure comprises 140 residues: Ribonuclease P protein subunit p20 (140 aa).

Belongs to the histone-like Alba family. Component of nuclear RNase P and RNase MRP complexes. RNase P consists of a catalytic RNA moiety and 10 different protein chains; POP1, POP4, POP5, POP7, RPP14, RPP21, RPP25, RPP30, RPP38 and RPP40. Within the RNase P complex, POP1, POP7 and RPP25 form the 'finger' subcomplex, POP5, RPP14, RPP40 and homodimeric RPP30 form the 'palm' subcomplex, and RPP21, POP4 and RPP38 form the 'wrist' subcomplex. All subunits of the RNase P complex interact with the catalytic RNA. Several subunits of RNase P are also part of the RNase MRP complex. RNase MRP consists of a catalytic RNA moiety and about 8 protein subunits; POP1, POP7, RPP25, RPP30, RPP38, RPP40 and possibly also POP4 and POP5. Interacts with SMN1. POP7 forms a heterodimer with RPP25 that binds to the P3 stem loop of the catalytic RNA.

The protein resides in the nucleus. The protein localises to the nucleolus. It is found in the cytoplasm. Its subcellular location is the cytoplasmic granule. Functionally, component of ribonuclease P, a ribonucleoprotein complex that generates mature tRNA molecules by cleaving their 5'-ends. Also a component of the MRP ribonuclease complex, which cleaves pre-rRNA sequences. The protein is Ribonuclease P protein subunit p20 (Pop7) of Mus musculus (Mouse).